Consider the following 692-residue polypeptide: UvrABC system protein C (692 aa).

Residues 16 to 95 (ETPGVYRFRD…IKEFDPRFNV (80 aa)) enclose the GIY-YIG domain. Residues 208–243 (GRYLRRLEREMRAAAEAQEYERAARLRDDIGALRRA) enclose the UVR domain. Residues 492 to 511 (GELEEYPGAPTGDDEAPETG) are disordered.

It belongs to the UvrC family. Interacts with UvrB in an incision complex.

The protein resides in the cytoplasm. In terms of biological role, the UvrABC repair system catalyzes the recognition and processing of DNA lesions. UvrC both incises the 5' and 3' sides of the lesion. The N-terminal half is responsible for the 3' incision and the C-terminal half is responsible for the 5' incision. The sequence is that of UvrABC system protein C from Parafrankia sp. (strain EAN1pec).